Reading from the N-terminus, the 477-residue chain is Glycogen synthase (477 aa).

Position 15 (lysine 15) interacts with ADP-alpha-D-glucose.

It belongs to the glycosyltransferase 1 family. Bacterial/plant glycogen synthase subfamily.

The catalysed reaction is [(1-&gt;4)-alpha-D-glucosyl](n) + ADP-alpha-D-glucose = [(1-&gt;4)-alpha-D-glucosyl](n+1) + ADP + H(+). The protein operates within glycan biosynthesis; glycogen biosynthesis. Synthesizes alpha-1,4-glucan chains using ADP-glucose. This chain is Glycogen synthase, found in Shigella flexneri serotype 5b (strain 8401).